Consider the following 92-residue polypeptide: UPF0298 protein ABC2380 (92 aa).

This sequence belongs to the UPF0298 family.

It localises to the cytoplasm. In Shouchella clausii (strain KSM-K16) (Alkalihalobacillus clausii), this protein is UPF0298 protein ABC2380.